The chain runs to 308 residues: Ornithine carbamoyltransferase (308 aa).

Carbamoyl phosphate-binding positions include 56 to 59 (STRT), glutamine 83, arginine 107, and 134 to 137 (HPCQ). Residues asparagine 165, aspartate 225, and 229-230 (SM) contribute to the L-ornithine site. Carbamoyl phosphate is bound by residues 266 to 267 (CL) and arginine 294.

This sequence belongs to the aspartate/ornithine carbamoyltransferase superfamily. OTCase family.

The protein localises to the cytoplasm. The enzyme catalyses carbamoyl phosphate + L-ornithine = L-citrulline + phosphate + H(+). Its pathway is amino-acid biosynthesis; L-arginine biosynthesis; L-arginine from L-ornithine and carbamoyl phosphate: step 1/3. In terms of biological role, reversibly catalyzes the transfer of the carbamoyl group from carbamoyl phosphate (CP) to the N(epsilon) atom of ornithine (ORN) to produce L-citrulline. This Ruegeria pomeroyi (strain ATCC 700808 / DSM 15171 / DSS-3) (Silicibacter pomeroyi) protein is Ornithine carbamoyltransferase.